A 139-amino-acid chain; its full sequence is Putative pre-16S rRNA nuclease (139 aa).

It belongs to the YqgF nuclease family.

The protein localises to the cytoplasm. In terms of biological role, could be a nuclease involved in processing of the 5'-end of pre-16S rRNA. The polypeptide is Putative pre-16S rRNA nuclease (Streptococcus suis (strain 98HAH33)).